Reading from the N-terminus, the 136-residue chain is Large ribosomal subunit protein eL27B (136 aa).

It belongs to the eukaryotic ribosomal protein eL27 family. Component of the large ribosomal subunit (LSU). Mature yeast ribosomes consist of a small (40S) and a large (60S) subunit. The 40S small subunit contains 1 molecule of ribosomal RNA (18S rRNA) and at least 33 different proteins. The large 60S subunit contains 3 rRNA molecules (25S, 5.8S and 5S rRNA) and at least 46 different proteins.

The protein resides in the cytoplasm. Functionally, component of the ribosome, a large ribonucleoprotein complex responsible for the synthesis of proteins in the cell. The small ribosomal subunit (SSU) binds messenger RNAs (mRNAs) and translates the encoded message by selecting cognate aminoacyl-transfer RNA (tRNA) molecules. The large subunit (LSU) contains the ribosomal catalytic site termed the peptidyl transferase center (PTC), which catalyzes the formation of peptide bonds, thereby polymerizing the amino acids delivered by tRNAs into a polypeptide chain. The nascent polypeptides leave the ribosome through a tunnel in the LSU and interact with protein factors that function in enzymatic processing, targeting, and the membrane insertion of nascent chains at the exit of the ribosomal tunnel. The protein is Large ribosomal subunit protein eL27B (rpl2702) of Schizosaccharomyces pombe (strain 972 / ATCC 24843) (Fission yeast).